The sequence spans 266 residues: Protein crossbronx-like (266 aa).

Residues Lys-15–Asn-178 form the UBC core domain.

The protein belongs to the ubiquitin-conjugating enzyme family. FTS subfamily.

This Drosophila yakuba (Fruit fly) protein is Protein crossbronx-like.